A 401-amino-acid polypeptide reads, in one-letter code: Probable inactive purple acid phosphatase 14 (401 aa).

The first 30 residues, 1-30, serve as a signal peptide directing secretion; sequence MEETRRRFVISSVLSVSLIYLCLSTCHVSA. A glycan (N-linked (GlcNAc...) asparagine) is linked at Asn-79. Position 197 (Asn-197) interacts with substrate. A Zn(2+)-binding site is contributed by Asn-197. Asn-246 carries N-linked (GlcNAc...) asparagine glycosylation. His-256 serves as a coordination point for Zn(2+). Residue Asn-266 is glycosylated (N-linked (GlcNAc...) asparagine). Zn(2+) is bound at residue His-305. 305-307 is a substrate binding site; the sequence is HDH. Fe cation is bound at residue His-307. N-linked (GlcNAc...) asparagine glycans are attached at residues Asn-371 and Asn-384.

Belongs to the metallophosphoesterase superfamily. Purple acid phosphatase family. As to quaternary structure, homodimer. The cofactor is Fe cation. It depends on Zn(2+) as a cofactor. As to expression, specifically expressed in flowers.

It is found in the secreted. This chain is Probable inactive purple acid phosphatase 14 (PAP14), found in Arabidopsis thaliana (Mouse-ear cress).